A 269-amino-acid polypeptide reads, in one-letter code: JmjC domain-containing protein 8 (269 aa).

Residues 1 to 24 form the signal peptide; the sequence is MAAAGRFGLLLLIVLWTMVTVVLP. N-linked (GlcNAc...) asparagine glycans are attached at residues Asn135, Asn145, and Asn214. Residues 147-269 enclose the JmjC domain; the sequence is TEWAPLFQHY…TSVFISTFLG (123 aa).

As to quaternary structure, oligomer. Dimer. Interacts with PKM; regulates angiogenesis and metabolism. N-glycosylated.

It is found in the endoplasmic reticulum lumen. Its subcellular location is the cytoplasm. Functions as a positive regulator of TNF-induced NF-kappaB signaling. Regulates angiogenesis and cellular metabolism through interaction with PKM. This is JmjC domain-containing protein 8 from Rattus norvegicus (Rat).